Reading from the N-terminus, the 376-residue chain is Chaperone protein DnaJ (376 aa).

The J domain maps to 5-70 (DYYEVLGVAK…QKRAAYDQYG (66 aa)). The CR-type zinc finger occupies 136-214 (GYDTQIRVPS…CHGSGKVKET (79 aa)). Zn(2+)-binding residues include C149, C152, C166, C169, C188, C191, C202, and C205. CXXCXGXG motif repeat units lie at residues 149 to 156 (CEVCHGSG), 166 to 173 (CPTCHGQG), 188 to 195 (CPKCHGTG), and 202 to 209 (CAHCHGSG).

The protein belongs to the DnaJ family. Homodimer. Requires Zn(2+) as cofactor.

Its subcellular location is the cytoplasm. In terms of biological role, participates actively in the response to hyperosmotic and heat shock by preventing the aggregation of stress-denatured proteins and by disaggregating proteins, also in an autonomous, DnaK-independent fashion. Unfolded proteins bind initially to DnaJ; upon interaction with the DnaJ-bound protein, DnaK hydrolyzes its bound ATP, resulting in the formation of a stable complex. GrpE releases ADP from DnaK; ATP binding to DnaK triggers the release of the substrate protein, thus completing the reaction cycle. Several rounds of ATP-dependent interactions between DnaJ, DnaK and GrpE are required for fully efficient folding. Also involved, together with DnaK and GrpE, in the DNA replication of plasmids through activation of initiation proteins. The chain is Chaperone protein DnaJ from Burkholderia multivorans (strain ATCC 17616 / 249).